Reading from the N-terminus, the 187-residue chain is Guanylate kinase (187 aa).

An N-acetylserine modification is found at serine 2. The Guanylate kinase-like domain occupies 2-184 (SRPIVISGPS…AYKELKDFIF (183 aa)). 9–16 (GPSGTGKS) serves as a coordination point for ATP. GMP-binding positions include serine 35, 39–42 (RTPR), tyrosine 51, glutamate 70, 79–81 (YGS), and aspartate 101. A Phosphoserine modification is found at serine 149. The residue at position 157 (tyrosine 157) is a Phosphotyrosine.

The protein belongs to the guanylate kinase family. Monomer.

The catalysed reaction is GMP + ATP = GDP + ADP. In terms of biological role, catalyzes the reversible transfer of the terminal phosphoryl group of ATP to the acceptor molecule GMP. Essential for recycling GMP and indirectly, cGMP. This Saccharomyces cerevisiae (strain ATCC 204508 / S288c) (Baker's yeast) protein is Guanylate kinase (GUK1).